The following is a 129-amino-acid chain: Small ribosomal subunit protein uS11 (129 aa).

The protein belongs to the universal ribosomal protein uS11 family. As to quaternary structure, part of the 30S ribosomal subunit. Interacts with proteins S7 and S18. Binds to IF-3.

In terms of biological role, located on the platform of the 30S subunit, it bridges several disparate RNA helices of the 16S rRNA. Forms part of the Shine-Dalgarno cleft in the 70S ribosome. In Nitrosomonas europaea (strain ATCC 19718 / CIP 103999 / KCTC 2705 / NBRC 14298), this protein is Small ribosomal subunit protein uS11.